The following is a 658-amino-acid chain: Endoglucanase 3 (658 aa).

Positions 1 to 23 (MQLKNFYPKMSVLGIATVMALTA) are cleaved as a signal peptide. Cysteine 24 carries N-palmitoyl cysteine lipidation. Residue cysteine 24 is the site of S-diacylglycerol cysteine attachment. Residues 24–265 (CGDENTQALF…TDSLFIDNIY (242 aa)) constitute a propeptide that is removed on maturation. The interval 42–83 (ENQVPVSSSDMSPTSSDAVIDPTSSSAAVVDPSTLPAEGPIT) is disordered. The span at 45-58 (VPVSSSDMSPTSSD) shows a compositional bias: low complexity. The CBM11 domain occupies 87–277 (GLGTLVDDFE…DSSEVEKDQP (191 aa)). The Proton donor role is filled by glutamate 448. Residue glutamate 597 is the Nucleophile of the active site.

This sequence belongs to the glycosyl hydrolase 5 (cellulase A) family. Monomer. In terms of processing, may be a lipoprotein and may be glycosylated.

Its subcellular location is the membrane. It carries out the reaction Endohydrolysis of (1-&gt;4)-beta-D-glucosidic linkages in cellulose, lichenin and cereal beta-D-glucans.. Its function is as follows. Exhibits both endoglucanase and cellobiosidase activities. The polypeptide is Endoglucanase 3 (cel-3) (Fibrobacter succinogenes (strain ATCC 19169 / S85)).